A 179-amino-acid polypeptide reads, in one-letter code: uncharacterized protein (179 aa).

The tract at residues T27–K54 is disordered.

This is an uncharacterized protein from Escherichia coli (strain K12).